The following is a 514-amino-acid chain: Nuclear hormone receptor family member nhr-85 (514 aa).

The disordered stretch occupies residues 28 to 48 (TSFSSPPATSSSSLLSPSPSS). A DNA-binding region (nuclear receptor) is located at residues 110–186 (TILCQVCSDK…VGMSRDAVRF (77 aa)). 2 NR C4-type zinc fingers span residues 113-133 (CQVC…CEGC) and 150-174 (CTRA…LKKC). Residues 216 to 514 (QYENLTEVMH…VSPVPTTLSE (299 aa)) enclose the NR LBD domain. The tract at residues 465-514 (ERPRRISSSGAQEPLNLSLPHVRHQVKRDVDSDEQLEEMKVSPVPTTLSE) is disordered.

Belongs to the nuclear hormone receptor family.

It localises to the nucleus. Its function is as follows. Orphan nuclear receptor. In Caenorhabditis elegans, this protein is Nuclear hormone receptor family member nhr-85 (nhr-85).